A 741-amino-acid chain; its full sequence is Penicillin-binding protein 1B (741 aa).

The Cytoplasmic segment spans residues methionine 1–phenylalanine 12. A helical; Signal-anchor for type II membrane protein transmembrane segment spans residues leucine 13–phenylalanine 33. Over lysine 34–threonine 741 the chain is Extracellular. A transglycosylase region spans residues leucine 139 to valine 311. Glutamate 177 (proton donor; for transglycosylase activity) is an active-site residue. Residues glutamate 395–asparagine 687 are transpeptidase. The active-site Acyl-ester intermediate; for transpeptidase activity is serine 454.

In the N-terminal section; belongs to the glycosyltransferase 51 family. It in the C-terminal section; belongs to the transpeptidase family.

It localises to the cell membrane. The enzyme catalyses [GlcNAc-(1-&gt;4)-Mur2Ac(oyl-L-Ala-gamma-D-Glu-L-Lys-D-Ala-D-Ala)](n)-di-trans,octa-cis-undecaprenyl diphosphate + beta-D-GlcNAc-(1-&gt;4)-Mur2Ac(oyl-L-Ala-gamma-D-Glu-L-Lys-D-Ala-D-Ala)-di-trans,octa-cis-undecaprenyl diphosphate = [GlcNAc-(1-&gt;4)-Mur2Ac(oyl-L-Ala-gamma-D-Glu-L-Lys-D-Ala-D-Ala)](n+1)-di-trans,octa-cis-undecaprenyl diphosphate + di-trans,octa-cis-undecaprenyl diphosphate + H(+). The catalysed reaction is Preferential cleavage: (Ac)2-L-Lys-D-Ala-|-D-Ala. Also transpeptidation of peptidyl-alanyl moieties that are N-acyl substituents of D-alanine.. The protein operates within cell wall biogenesis; peptidoglycan biosynthesis. In terms of biological role, cell wall formation. Synthesis of cross-linked peptidoglycan from the lipid intermediates. The enzyme has a penicillin-insensitive transglycosylase N-terminal domain (formation of linear glycan strands) and a penicillin-sensitive transpeptidase C-terminal domain (cross-linking of the peptide subunits). The polypeptide is Penicillin-binding protein 1B (mrcB) (Buchnera aphidicola subsp. Baizongia pistaciae (strain Bp)).